Consider the following 452-residue polypeptide: tRNA-2-methylthio-N(6)-dimethylallyladenosine synthase (452 aa).

Residues 3 to 118 (KKVFIKTYGC…LPQLLAERER (116 aa)) form the MTTase N-terminal domain. Positions 12, 49, 81, 155, 159, and 162 each coordinate [4Fe-4S] cluster. The Radical SAM core domain maps to 141–379 (RVEGASAFVS…QTVINDSIKR (239 aa)). The region spanning 382-445 (ESRLGTVQRI…SFTLRGEVVT (64 aa)) is the TRAM domain.

Belongs to the methylthiotransferase family. MiaB subfamily. As to quaternary structure, monomer. The cofactor is [4Fe-4S] cluster.

Its subcellular location is the cytoplasm. The catalysed reaction is N(6)-dimethylallyladenosine(37) in tRNA + (sulfur carrier)-SH + AH2 + 2 S-adenosyl-L-methionine = 2-methylsulfanyl-N(6)-dimethylallyladenosine(37) in tRNA + (sulfur carrier)-H + 5'-deoxyadenosine + L-methionine + A + S-adenosyl-L-homocysteine + 2 H(+). Functionally, catalyzes the methylthiolation of N6-(dimethylallyl)adenosine (i(6)A), leading to the formation of 2-methylthio-N6-(dimethylallyl)adenosine (ms(2)i(6)A) at position 37 in tRNAs that read codons beginning with uridine. In Albidiferax ferrireducens (strain ATCC BAA-621 / DSM 15236 / T118) (Rhodoferax ferrireducens), this protein is tRNA-2-methylthio-N(6)-dimethylallyladenosine synthase.